Reading from the N-terminus, the 218-residue chain is Ribose-5-phosphate isomerase A (218 aa).

Substrate-binding positions include 28–31, 81–84, and 94–97; these read TGST, DGAD, and KGGG. E103 (proton acceptor) is an active-site residue. K121 lines the substrate pocket.

This sequence belongs to the ribose 5-phosphate isomerase family. In terms of assembly, homodimer.

The enzyme catalyses aldehydo-D-ribose 5-phosphate = D-ribulose 5-phosphate. It participates in carbohydrate degradation; pentose phosphate pathway; D-ribose 5-phosphate from D-ribulose 5-phosphate (non-oxidative stage): step 1/1. In terms of biological role, catalyzes the reversible conversion of ribose-5-phosphate to ribulose 5-phosphate. This is Ribose-5-phosphate isomerase A from Shewanella sediminis (strain HAW-EB3).